The sequence spans 542 residues: Chaperonin GroEL 1 (542 aa).

ATP contacts are provided by residues T29 to P32, D86 to T90, G413, N477 to A479, and D493.

The protein belongs to the chaperonin (HSP60) family. In terms of assembly, forms a cylinder of 14 subunits composed of two heptameric rings stacked back-to-back. Interacts with the co-chaperonin GroES.

It localises to the cytoplasm. The catalysed reaction is ATP + H2O + a folded polypeptide = ADP + phosphate + an unfolded polypeptide.. Functionally, together with its co-chaperonin GroES, plays an essential role in assisting protein folding. The GroEL-GroES system forms a nano-cage that allows encapsulation of the non-native substrate proteins and provides a physical environment optimized to promote and accelerate protein folding. In Renibacterium salmoninarum (strain ATCC 33209 / DSM 20767 / JCM 11484 / NBRC 15589 / NCIMB 2235), this protein is Chaperonin GroEL 1.